Consider the following 226-residue polypeptide: UPF0502 protein azo0627 (226 aa).

The protein belongs to the UPF0502 family.

In Azoarcus sp. (strain BH72), this protein is UPF0502 protein azo0627.